Here is a 190-residue protein sequence, read N- to C-terminus: Iron-sulfur protein (190 aa).

A 4Fe-4S ferredoxin-type 1 domain is found at 8–36 (VIIYANPDHCLSCHSCELACAVAHSGGHD). Positions 17, 20, 23, 27, 65, 68, 73, 77, 96, 99, 102, 106, 133, 136, 150, and 154 each coordinate [4Fe-4S] cluster. 4Fe-4S ferredoxin-type domains lie at 87–116 (GQVQ…VRSE) and 133–164 (CDLC…MVDL).

Functionally, the carbon monoxide dehydrogenase (CODH) oxidizes carbon monoxide coupled, via CooF, to the reduction of a hydrogen cation by a hydrogenase (probably CooH). CooF is required in stoichiometric amounts in vitro for anchoring CODH to the membrane as well as for conveying the electrons to the hydrogenase. This Rhodospirillum rubrum protein is Iron-sulfur protein (cooF).